Here is a 252-residue protein sequence, read N- to C-terminus: Imidazole glycerol phosphate synthase subunit HisF (252 aa).

Catalysis depends on residues aspartate 11 and aspartate 130.

The protein belongs to the HisA/HisF family. As to quaternary structure, heterodimer of HisH and HisF.

It localises to the cytoplasm. It catalyses the reaction 5-[(5-phospho-1-deoxy-D-ribulos-1-ylimino)methylamino]-1-(5-phospho-beta-D-ribosyl)imidazole-4-carboxamide + L-glutamine = D-erythro-1-(imidazol-4-yl)glycerol 3-phosphate + 5-amino-1-(5-phospho-beta-D-ribosyl)imidazole-4-carboxamide + L-glutamate + H(+). It functions in the pathway amino-acid biosynthesis; L-histidine biosynthesis; L-histidine from 5-phospho-alpha-D-ribose 1-diphosphate: step 5/9. In terms of biological role, IGPS catalyzes the conversion of PRFAR and glutamine to IGP, AICAR and glutamate. The HisF subunit catalyzes the cyclization activity that produces IGP and AICAR from PRFAR using the ammonia provided by the HisH subunit. This Staphylococcus aureus (strain USA300) protein is Imidazole glycerol phosphate synthase subunit HisF.